Consider the following 1191-residue polypeptide: MPSEGSQQPSLDSFFKRKNPRVEPYSRTGNNAIIDLTDSPPNKKIKLDDEGSQKNRSMTQTSSSYFKGHPTARPLSVDKRLPRKPSAAIQAYKLQDVIPPQPSHSGLAFETCSLVPQASFVPDSQPEPSASPAPQRTTEQLKRHEEWKTRILAMSGSFRRKRSLALDEAVAAEAREAAGLEDEGTPFDGSDGDDYKSESEKNAEEVGKQLKKYVAKELAGKGKSKGKKKEEIGPSGLAYTPLEKQFMEIKEQNRDVLLLMEVGYKYKFHGEDAKTASRELGIVAFPNRNFFTASIPTHRLHIHVKKLLSLGYKVGVITQTETAALKKIGDNRNAPFARKLTHLFTAATYVEDPSLSSSSSSSSSVRFDDPVVPGTAPPPTNALVAIVEQPVDRASDDRVKVGLVCVVPGTGDITWDEFDDSQIRTELETRLAHLSPAELLLPKQRLTKATEKVLTYFAGEPKHRGRNAVRIERIDNIPEYDAAFDFLTNFYHCKEHKATVSKGDVNDERHLMTEGNKQWSLQPKLSQDGADISLDEEIYLASGVSSSKAILTLVDFPKQVVISMAVAIRYMKRFGLENAFKHTSSFVRFANRSHMLLSSNTLANLEIYQNQTDGGLYGSLIWLLDHCKTRMGKRLLREWVGRPLLDVAALKARADAIEEIMENNSYHMEKLRSLLINMPDLVRGLTRVQYGKATPNELATLLITLVRLASEFKPNMGNVFRSCLLNNIPNTLPTILDTSQRFLNALNLKQARENDVANLWADPDRFPDIQDVKDCISVCEMELNEHLMELRKILKKPTLRYITVSGIEYLVEVPIRDTKIVPAQWMKISATRTVNRYHTPKILAITKERTQHLEKLSIVAREAFIAFQSEVAEYHELVVVSKQIAVIDCLMSLAQTAAASGYCKPKFVAEPELKILAGRHPMVEMLREESYVPFDIHFSKEEGTTKIITGPNMAGKSSTVRAMALIVCMAQIGSFVPAASVTLSVHDSVQTRMGASDEIGRGKSTFMVELSETSDILQTITPRSLVVLDELGRGTSTYDGIAIAYATLSHIAEIGCNTLFVTHYPTVAQDLAREKPDKISNWHMSFDEIQMPDGGAEITFLYQLTRGLQEASFGVWCARLAGLPKPILDTAQMRSSSLKAETQERLRGIVARRVGWMLHNLFDNKTSSSQVLRNVEMLHNSLSSSSISFSQ.

Polar residues-rich tracts occupy residues 1-11 (MPSEGSQQPSL) and 54-65 (KNRSMTQTSSSY). Disordered stretches follow at residues 1–82 (MPSE…KRLP), 118–148 (ASFV…EEWK), and 175–203 (REAA…EKNA). The segment covering 122–135 (PDSQPEPSASPAPQ) has biased composition (low complexity). Basic and acidic residues-rich tracts occupy residues 139-148 (EQLKRHEEWK) and 193-203 (DDYKSESEKNA). The mispair-binding domain stretch occupies residues 233–347 (GPSGLAYTPL…RKLTHLFTAA (115 aa)). 950–957 (GPNMAGKS) lines the ATP pocket.

Belongs to the DNA mismatch repair MutS family. MSH3 subfamily. Heterodimer consisting of MSH2-MSH3 (MutS beta). Forms a ternary complex with MutL alpha (MLH1-PMS1).

Its subcellular location is the nucleus. In terms of biological role, component of the post-replicative DNA mismatch repair system (MMR). Heterodimerizes with MSH2 to form MutS beta, which binds to DNA mismatches thereby initiating DNA repair. MSH3 provides substrate-binding and substrate specificity to the complex. When bound, the MutS beta heterodimer bends the DNA helix and shields approximately 20 base pairs. Acts mainly to repair insertion-deletion loops (IDLs) from 2 to 13 nucleotides in size, but can also repair base-base and single insertion-deletion mismatches that occur during replication. After mismatch binding, forms a ternary complex with the MutL alpha heterodimer, which is thought to be responsible for directing the downstream MMR events, including strand discrimination, excision, and resynthesis. ATP binding and hydrolysis play a pivotal role in mismatch repair functions. The protein is DNA mismatch repair protein MSH3 (MSH3) of Cryptococcus neoformans var. neoformans serotype D (strain B-3501A) (Filobasidiella neoformans).